The chain runs to 451 residues: Protein tweety homolog 1-B (451 aa).

Topologically, residues methionine 1–alanine 43 are extracellular. The helical transmembrane segment at leucine 44–valine 64 threads the bilayer. Over tyrosine 65–cysteine 86 the chain is Cytoplasmic. A helical membrane pass occupies residues cysteine 87 to phenylalanine 107. At tyrosine 108–tryptophan 214 the chain is on the extracellular side. Asparagine 128 is a glycosylation site (N-linked (GlcNAc...) asparagine). The helical transmembrane segment at leucine 215–leucine 235 threads the bilayer. Topologically, residues alanine 236 to lysine 240 are cytoplasmic. Residues tryptophan 241–methionine 261 form a helical membrane-spanning segment. The Extracellular segment spans residues glycine 262–glutamate 390. 2 disulfides stabilise this stretch: cysteine 275/cysteine 385 and cysteine 303/cysteine 370. Asparagine 284 and asparagine 355 each carry an N-linked (GlcNAc...) asparagine glycan. The chain crosses the membrane as a helical span at residues glycine 391–cysteine 411. Residues serine 412–isoleucine 451 lie on the Cytoplasmic side of the membrane.

It belongs to the tweety family. Homotetramer; disulfide-linked. Homodimer.

The protein resides in the cell membrane. The catalysed reaction is chloride(in) = chloride(out). It carries out the reaction L-glutamate(out) = L-glutamate(in). Its function is as follows. May act as a calcium-independent, swelling-dependent volume-regulated anion channel (VRAC-swell) which plays a pivotal role in the process of regulatory volume decrease (RVD) in the brain through the efflux of anions like chloride and organic osmolytes like glutamate. In Xenopus laevis (African clawed frog), this protein is Protein tweety homolog 1-B (ttyh1-b).